A 289-amino-acid chain; its full sequence is Tachykinins (289 aa).

Positions 1–24 (MRPLSGLIALALLLLLLLTAPSSA) are cleaved as a signal peptide. The tract at residues 24–94 (AADTETESSG…DEEADSSYAE (71 aa)) is disordered. Positions 25-47 (ADTETESSGSPLTPGAEEPRRVV) are excised as a propeptide. Residue Arg59 is modified to Arginine amide. Residues 60–69 (GKKDEEHDTS) are compositionally biased toward basic and acidic residues. Asn95 carries the post-translational modification Asparagine amide. Residue Arg110 is modified to Arginine amide. Residue Val153 is modified to Valine amide. Arg165, Arg200, Arg239, and Arg281 each carry arginine amide. Positions 285 to 289 (PALFE) are excised as a propeptide.

Belongs to the tachykinin family. In terms of tissue distribution, strong expression is seen in a group of 14 cells plus one isolated cell in the midgut of stage 17 embryos. Also expressed in a pair of medially located unidentified cells, just posterior to the brain, and in two lateral groups of cells that may be associated with tracheae. Expression in the larval gut is restricted to cells with endocrine cell-like morphology in the posterior midgut, just anterior to the malphigian tubules. In the brain, expression is detected in a restricted number of neuronal cell bodies. Expression in the adult female gut is restricted to the midgut with no expression detected in the hindgut.

The protein localises to the secreted. Functionally, tachykinins are active peptides which excite neurons, evoke behavioral responses, are potent vasodilators and secretagogues, and contract (directly or indirectly) many smooth muscles. Stimulates gut muscle contractions. Required for the response to the male sex pheromone CH503 which is transferred from males to females during mating and inhibits courtship behavior by other males. The Gr68a gustatory receptor is required for detection of the pheromone and Gr68a-expressing neurons in the male foreleg relay signals to the suboesophageal zone (SEZ) which leads to courtship suppression through release of tachykinin from a cluster of 8-10 neurons in the SEZ. The protein is Tachykinins of Drosophila melanogaster (Fruit fly).